The following is a 252-amino-acid chain: Adenylate kinase (252 aa).

47–52 (GSGKGT) serves as a coordination point for ATP. Residues 67–96 (ATGDMLRSQVKQGTPLGLEAKKIMDQGGLV) are NMP. AMP-binding positions include Thr68, Arg73, 94–96 (GLV), 123–126 (GFPR), and Gln130. The tract at residues 164-201 (GRLVHPASGRSYHKIFSPPKKEMTDDITGEPLVQRSDD) is LID. ATP is bound by residues Arg165 and 174-175 (SY). AMP contacts are provided by Arg198 and Arg209. Gln237 provides a ligand contact to ATP.

The protein belongs to the adenylate kinase family. AK2 subfamily. Monomer.

Its subcellular location is the cytoplasm. The protein localises to the cytosol. The protein resides in the mitochondrion intermembrane space. It carries out the reaction AMP + ATP = 2 ADP. Its function is as follows. Catalyzes the reversible transfer of the terminal phosphate group between ATP and AMP. Plays an important role in cellular energy homeostasis and in adenine nucleotide metabolism. Adenylate kinase activity is critical for regulation of the phosphate utilization and the AMP de novo biosynthesis pathways. The chain is Adenylate kinase from Lodderomyces elongisporus (strain ATCC 11503 / CBS 2605 / JCM 1781 / NBRC 1676 / NRRL YB-4239) (Yeast).